A 405-amino-acid chain; its full sequence is Argininosuccinate synthase (405 aa).

Residues 10–18 and Ala-37 contribute to the ATP site; that span reads AYSGGLDTS. L-citrulline-binding residues include Tyr-88 and Ser-93. An ATP-binding site is contributed by Gly-118. Residues Thr-120, Asn-124, and Asp-125 each coordinate L-aspartate. Asn-124 contributes to the L-citrulline binding site. 5 residues coordinate L-citrulline: Arg-128, Ser-179, Ser-188, Glu-264, and Tyr-276.

This sequence belongs to the argininosuccinate synthase family. Type 1 subfamily. Homotetramer.

Its subcellular location is the cytoplasm. It carries out the reaction L-citrulline + L-aspartate + ATP = 2-(N(omega)-L-arginino)succinate + AMP + diphosphate + H(+). It functions in the pathway amino-acid biosynthesis; L-arginine biosynthesis; L-arginine from L-ornithine and carbamoyl phosphate: step 2/3. This chain is Argininosuccinate synthase, found in Stutzerimonas stutzeri (strain A1501) (Pseudomonas stutzeri).